The sequence spans 519 residues: Xylose import ATP-binding protein XylG (519 aa).

ABC transporter domains follow at residues 6–245 and 262–507; these read MTMR…VGRE and FEAR…IRPV. Residue 38 to 45 participates in ATP binding; that stretch reads GENGAGKS.

It belongs to the ABC transporter superfamily. Xylose importer (TC 3.A.1.2.4) family. In terms of assembly, the complex is composed of two ATP-binding proteins (XylG), two transmembrane proteins (XylH) and a solute-binding protein (XylF).

The protein resides in the cell inner membrane. It catalyses the reaction D-xylose(out) + ATP + H2O = D-xylose(in) + ADP + phosphate + H(+). In terms of biological role, part of the ABC transporter complex XylFGH involved in xylose import. Responsible for energy coupling to the transport system. The protein is Xylose import ATP-binding protein XylG of Paraburkholderia xenovorans (strain LB400).